A 948-amino-acid chain; its full sequence is Glycine dehydrogenase (decarboxylating) (948 aa).

Lys696 carries the N6-(pyridoxal phosphate)lysine modification.

This sequence belongs to the GcvP family. As to quaternary structure, the glycine cleavage system is composed of four proteins: P, T, L and H. Pyridoxal 5'-phosphate serves as cofactor.

The catalysed reaction is N(6)-[(R)-lipoyl]-L-lysyl-[glycine-cleavage complex H protein] + glycine + H(+) = N(6)-[(R)-S(8)-aminomethyldihydrolipoyl]-L-lysyl-[glycine-cleavage complex H protein] + CO2. Its function is as follows. The glycine cleavage system catalyzes the degradation of glycine. The P protein binds the alpha-amino group of glycine through its pyridoxal phosphate cofactor; CO(2) is released and the remaining methylamine moiety is then transferred to the lipoamide cofactor of the H protein. The protein is Glycine dehydrogenase (decarboxylating) of Akkermansia muciniphila (strain ATCC BAA-835 / DSM 22959 / JCM 33894 / BCRC 81048 / CCUG 64013 / CIP 107961 / Muc).